The chain runs to 334 residues: Phosphate acyltransferase (334 aa).

This sequence belongs to the PlsX family. As to quaternary structure, homodimer. Probably interacts with PlsY.

It localises to the cytoplasm. The enzyme catalyses a fatty acyl-[ACP] + phosphate = an acyl phosphate + holo-[ACP]. It participates in lipid metabolism; phospholipid metabolism. Catalyzes the reversible formation of acyl-phosphate (acyl-PO(4)) from acyl-[acyl-carrier-protein] (acyl-ACP). This enzyme utilizes acyl-ACP as fatty acyl donor, but not acyl-CoA. This chain is Phosphate acyltransferase, found in Fervidobacterium nodosum (strain ATCC 35602 / DSM 5306 / Rt17-B1).